The sequence spans 248 residues: D-xylose 1-dehydrogenase (248 aa).

NAD(+)-binding residues include Asp42, Asp68, Asn91, Tyr156, Lys160, Val189, and Thr191. The active-site Proton acceptor is Tyr156.

It belongs to the short-chain dehydrogenases/reductases (SDR) family.

The enzyme catalyses D-xylose + NAD(+) = D-xylono-1,5-lactone + NADH + H(+). Involved in the degradation of D-xylose. Catalyzes the initial reaction in the xylose utilization pathway by oxydizing D-xylose into D-xylonolactone. Shows some activity with L-arabinose and D-lyxose, but D-xylose is clearly the best substrate. Has no activity with D-ribose, D-glucose, D-galactose or D-mannose. This is D-xylose 1-dehydrogenase from Caulobacter vibrioides (strain ATCC 19089 / CIP 103742 / CB 15) (Caulobacter crescentus).